Consider the following 344-residue polypeptide: MRILEFDEKRQAAKLHIESEDDLWILHLILEKGDKVVAKTTRDIGLGKESRRIPMTIVLKVDYTEFQEFTNRLRIHGIIEDAPERFGIRGAHHTINLDIGDEIIIIKQQWNKYALDKLKKQADKRSKIIIALVDFDEYLIAIPFEQGIKILSEKSLRSLNEEEGIIEQNALEVATELAEYVKQYNPDAILLAGPGFFKEEVAKKVNNILKNKKVYIDSVSSATRAGLHEILKRDIIDKIMSDYEIAIGAKKMEKAMELLAKQPELVTYGLEQVKNAVEMGAVETVLLIEDLLSSNNQERLAIERILEDIENKRGEIILVPKESPIYFELKNLTGILAILRFRIN.

This sequence belongs to the eukaryotic release factor 1 family. Pelota subfamily. In terms of assembly, monomer. A divalent metal cation is required as a cofactor.

The protein localises to the cytoplasm. In terms of biological role, may function in recognizing stalled ribosomes, interact with stem-loop structures in stalled mRNA molecules, and effect endonucleolytic cleavage of the mRNA. May play a role in the release non-functional ribosomes and degradation of damaged mRNAs. Has endoribonuclease activity. The protein is Protein pelota homolog of Saccharolobus islandicus (strain Y.N.15.51 / Yellowstone #2) (Sulfolobus islandicus).